A 271-amino-acid chain; its full sequence is uncharacterized protein (271 aa).

The signal sequence occupies residues 1–22; the sequence is MIHSKRLKLCLCLIILSVFIGA. Cys23 is lipidated: N-palmitoyl cysteine. The S-diacylglycerol cysteine moiety is linked to residue Cys23.

It belongs to the staphylococcal tandem lipoprotein family.

It localises to the cell membrane. This is an uncharacterized protein from Staphylococcus aureus (strain MW2).